A 304-amino-acid chain; its full sequence is Granaticin polyketide synthase bifunctional cyclase/dehydratase (304 aa).

It participates in antifungal biosynthesis; monensin biosynthesis. Is needed for correct cyclization of the oligoketide leading to isochromanequinone formation. The polypeptide is Granaticin polyketide synthase bifunctional cyclase/dehydratase (Streptomyces virginiae (Streptomyces cinnamonensis)).